The sequence spans 245 residues: Ribonuclease 3 (245 aa).

Residues 19–148 form the RNase III domain; it reads FKLFQEKIGI…FIGALYLDQG (130 aa). Residue Glu-61 coordinates Mg(2+). Asp-65 is a catalytic residue. Positions 134 and 137 each coordinate Mg(2+). Residue Glu-137 is part of the active site. The 70-residue stretch at 174 to 243 folds into the DRBM domain; the sequence is DYKSQLQELI…AAEALKKLKE (70 aa).

It belongs to the ribonuclease III family. In terms of assembly, homodimer. It depends on Mg(2+) as a cofactor.

Its subcellular location is the cytoplasm. It carries out the reaction Endonucleolytic cleavage to 5'-phosphomonoester.. In terms of biological role, digests double-stranded RNA. Involved in the processing of primary rRNA transcript to yield the immediate precursors to the large and small rRNAs (23S and 16S). Processes some mRNAs, and tRNAs when they are encoded in the rRNA operon. Processes pre-crRNA and tracrRNA of type II CRISPR loci if present in the organism. The polypeptide is Ribonuclease 3 (Bacillus cereus (strain 03BB102)).